The chain runs to 278 residues: UPF0750 membrane protein YxkD (278 aa).

A run of 5 helical transmembrane segments spans residues 8 to 28 (VLML…FAIP), 46 to 66 (LFQW…LLIG), 77 to 97 (YTII…GWSI), 101 to 121 (ELII…GMII), and 145 to 165 (ISYA…FIIG).

Belongs to the UPF0750 family.

It localises to the cell membrane. The polypeptide is UPF0750 membrane protein YxkD (yxkD) (Bacillus subtilis (strain 168)).